Here is a 230-residue protein sequence, read N- to C-terminus: Large ribosomal subunit protein uL1 (230 aa).

This sequence belongs to the universal ribosomal protein uL1 family. In terms of assembly, part of the 50S ribosomal subunit.

Binds directly to 23S rRNA. The L1 stalk is quite mobile in the ribosome, and is involved in E site tRNA release. Its function is as follows. Protein L1 is also a translational repressor protein, it controls the translation of the L11 operon by binding to its mRNA. This Nitrobacter winogradskyi (strain ATCC 25391 / DSM 10237 / CIP 104748 / NCIMB 11846 / Nb-255) protein is Large ribosomal subunit protein uL1.